We begin with the raw amino-acid sequence, 178 residues long: uncharacterized protein (178 aa).

4 helical membrane passes run 3–23, 56–76, 101–121, and 150–170; these read IPIILTLMLFSLGFIFGFISI, IFLMLAGSITFGLSTFINLIF, LILPHGIFEISAMLISAVAGF, and LSLISIILIVIAAFIEVYITP.

To M.jannaschii MJ0706 and Synechocystis PCC 6803 slr1478.

It localises to the cell membrane. This is an uncharacterized protein from Methanocaldococcus jannaschii (strain ATCC 43067 / DSM 2661 / JAL-1 / JCM 10045 / NBRC 100440) (Methanococcus jannaschii).